The following is a 164-amino-acid chain: Transcription antitermination protein NusB (164 aa).

It belongs to the NusB family.

In terms of biological role, involved in transcription antitermination. Required for transcription of ribosomal RNA (rRNA) genes. Binds specifically to the boxA antiterminator sequence of the ribosomal RNA (rrn) operons. This is Transcription antitermination protein NusB from Mycolicibacterium gilvum (strain PYR-GCK) (Mycobacterium gilvum (strain PYR-GCK)).